A 231-amino-acid chain; its full sequence is MKRAVVVFSGGQDSTTCLAQARHQYDEVHCVTFDYGQRHRAEIDVARALALKLGARAHKVLDVTLLNELAVSSLTRDSIPVPDYEPNADGIPNTFVPGRNILFLTLVAIYAYQVKAEAVITGVCETDFSGYPDCRDEFVKALNHAVNLGMAKDIRFETPLMWIDKAETWALADYWGQLDLVREETLTCYNGIKGDGCGHCAACNLRANGLNHYLSNKSAVMAAMKQKTGLR.

8 to 18 (FSGGQDSTTCL) is a binding site for ATP. The Zn(2+) site is built by cysteine 188, cysteine 197, cysteine 200, and cysteine 203.

It belongs to the QueC family. Zn(2+) serves as cofactor.

It catalyses the reaction 7-carboxy-7-deazaguanine + NH4(+) + ATP = 7-cyano-7-deazaguanine + ADP + phosphate + H2O + H(+). The protein operates within purine metabolism; 7-cyano-7-deazaguanine biosynthesis. Functionally, catalyzes the ATP-dependent conversion of 7-carboxy-7-deazaguanine (CDG) to 7-cyano-7-deazaguanine (preQ(0)). The sequence is that of 7-cyano-7-deazaguanine synthase from Salmonella paratyphi A (strain ATCC 9150 / SARB42).